The primary structure comprises 151 residues: Late embryogenesis abundant protein Lea14-A (151 aa).

It belongs to the LEA type 2 family.

This Gossypium hirsutum (Upland cotton) protein is Late embryogenesis abundant protein Lea14-A (LEA14-A).